A 266-amino-acid polypeptide reads, in one-letter code: Ribonuclease HII (266 aa).

The tract at residues 19–38 (HPGMIRDKEKPAPTKPGKGV) is disordered. An RNase H type-2 domain is found at 58–246 (WPVAGCDEAG…VVAARQKHQP (189 aa)). Residues aspartate 64, glutamate 65, and aspartate 155 each contribute to the a divalent metal cation site.

Belongs to the RNase HII family. The cofactor is Mn(2+). Mg(2+) serves as cofactor.

It localises to the cytoplasm. It catalyses the reaction Endonucleolytic cleavage to 5'-phosphomonoester.. Functionally, endonuclease that specifically degrades the RNA of RNA-DNA hybrids. The polypeptide is Ribonuclease HII (Rhodopseudomonas palustris (strain BisB18)).